Here is a 465-residue protein sequence, read N- to C-terminus: 6-phospho-beta-glucosidase (465 aa).

Glutamate 173 (proton donor) is an active-site residue. The Nucleophile role is filled by glutamate 362.

The protein belongs to the glycosyl hydrolase 1 family.

The catalysed reaction is 6-phospho-beta-D-glucosyl-(1-&gt;4)-D-glucose + H2O = D-glucose 6-phosphate + D-glucose. Its pathway is carbohydrate metabolism; beta-glucoside metabolism. The polypeptide is 6-phospho-beta-glucosidase (arbB) (Dickeya chrysanthemi (Pectobacterium chrysanthemi)).